The sequence spans 373 residues: Probable dual-specificity RNA methyltransferase RlmN (373 aa).

Glu-111 acts as the Proton acceptor in catalysis. A Radical SAM core domain is found at 117-356; sequence GPGRLTACLS…LRKSYGTSIH (240 aa). The cysteines at positions 124 and 359 are disulfide-linked. The [4Fe-4S] cluster site is built by Cys-131, Cys-135, and Cys-138. Residues 183–184, Ser-216, 239–241, and Asn-316 each bind S-adenosyl-L-methionine; these read GE and SLH. The active-site S-methylcysteine intermediate is the Cys-359.

Belongs to the radical SAM superfamily. RlmN family. [4Fe-4S] cluster serves as cofactor.

It localises to the cytoplasm. The enzyme catalyses adenosine(2503) in 23S rRNA + 2 reduced [2Fe-2S]-[ferredoxin] + 2 S-adenosyl-L-methionine = 2-methyladenosine(2503) in 23S rRNA + 5'-deoxyadenosine + L-methionine + 2 oxidized [2Fe-2S]-[ferredoxin] + S-adenosyl-L-homocysteine. It carries out the reaction adenosine(37) in tRNA + 2 reduced [2Fe-2S]-[ferredoxin] + 2 S-adenosyl-L-methionine = 2-methyladenosine(37) in tRNA + 5'-deoxyadenosine + L-methionine + 2 oxidized [2Fe-2S]-[ferredoxin] + S-adenosyl-L-homocysteine. In terms of biological role, specifically methylates position 2 of adenine 2503 in 23S rRNA and position 2 of adenine 37 in tRNAs. The chain is Probable dual-specificity RNA methyltransferase RlmN from Chlorobium phaeovibrioides (strain DSM 265 / 1930) (Prosthecochloris vibrioformis (strain DSM 265)).